Here is a 1734-residue protein sequence, read N- to C-terminus: Gag-Pol polyprotein (1734 aa).

The N-myristoyl glycine; by host moiety is linked to residue Gly2. The tract at residues 107–217 is disordered; it reads PSPTAPILPS…STTSRAFPLR (111 aa). Residues 109 to 112 carry the PTAP/PSAP motif motif; the sequence is PTAP. Residues 128–132 carry the LYPX(n)L motif motif; sequence LYPAL. The PPXY motif signature appears at 161–164; that stretch reads PPPY. The residue at position 191 (Ser191) is a Phosphoserine; by host. The interval 344 to 392 is interaction with host PIAS4; that stretch reads GRSPTNLAKVKGITQGPNESPSAFLERLKEAYRRYTPYDPEDPGQETNV. The interval 429 to 434 is interaction with host UBE2I; that stretch reads IFNKRE. 2 stretches are compositionally biased toward basic and acidic residues: residues 434-465 and 485-498; these read ETPE…EKER and RQDR…RPQL. Disordered regions lie at residues 434–498 and 512–552; these read ETPE…RPQL and WAKD…PRIT. Residues 437-478 adopt a coiled-coil conformation; the sequence is EEREERVRRETEEKEERRRAEEEQKEKERDRRRHREMSKLLA. The CCHC-type zinc-finger motif lies at 501–518; that stretch reads DQCAYCKEKGHWAKDCPK. The 71-residue stretch at 560–630 folds into the Peptidase A2 domain; that stretch reads VTFLVDTGAQ…CPYPLLGRDL (71 aa). Asp565 (protease; shared with dimeric partner) is an active-site residue. A Reverse transcriptase domain is found at 740–931; the sequence is LDQGILVPCQ…KQVKYLGYLL (192 aa). Asp808, Asp882, Asp883, Asp1182, Glu1220, Asp1241, and Asp1311 together coordinate Mg(2+). Residues 1173–1319 enclose the RNase H type-1 domain; that stretch reads PDADHTWYTD…ADQAAREAAI (147 aa). The HHCC-type zinc finger occupies 1386–1426; sequence HRLTHLGYQKMKALLDRGESPYYMLNRDKTLQYVADSCTVC. Residues 1443-1601 form the Integrase catalytic domain; sequence RGHRPGSHWE…TPYEILYGAP (159 aa). 2 residues coordinate Mg(2+): Asp1454 and Asp1513.

Belongs to the retroviral Pol polyprotein family. Homohexamer; further associates as homomultimer. The virus core is composed of a lattice formed from hexagonal rings, each containing six capsid monomers. As to quaternary structure, interacts (via PPXY motif) with host NEDD4. Interacts (via PSAP motif) with host TSG101. Interacts (via LYPX(n)L motif) with host PDCD6IP. In terms of assembly, the reverse transcriptase is a monomer (Potential). Interacts (via RNase domains) with host release factor ETF1; this interaction is essential for translational readthrough of amber codon between viral gag and pol genes, as well as for viral replication. Homodimer. Mg(2+) serves as cofactor. In terms of processing, ubiquitinated by ITCH. Gag can recruit the ubiquitin ligase Itch in an L domain-independent manner to facilitate virus release via a mechanism that involves Gag ubiquitination. Post-translationally, specific enzymatic cleavages by the viral protease yield mature proteins. The protease is released by autocatalytic cleavage. The polyprotein is cleaved during and after budding, this process is termed maturation. Sumoylated; which is required for virus replication. In terms of processing, phosphorylated on serine residues.

It localises to the virion. Its subcellular location is the host cell membrane. The protein resides in the host late endosome membrane. It is found in the host endosome. The protein localises to the host multivesicular body. It localises to the host cytoplasm. The enzyme catalyses DNA(n) + a 2'-deoxyribonucleoside 5'-triphosphate = DNA(n+1) + diphosphate. It carries out the reaction Endonucleolytic cleavage to 5'-phosphomonoester.. Its activity is regulated as follows. Most efficiently inhibited by Amprenavir, which is able to block Gag-Pol processing in infected cells. Its function is as follows. Plays a role in budding and is processed by the viral protease during virion maturation outside the cell. During budding, it recruits, in a PPXY-dependent or independent manner, Nedd4-like ubiquitin ligases that conjugate ubiquitin molecules to Gag-Pol, or to Gag-Pol binding host factors. Interaction with HECT ubiquitin ligases probably link the viral protein to the host ESCRT pathway and facilitates release. Targets Gag and gag-pol polyproteins to the plasma membrane via a multipartite membrane binding signal, that includes its myristoylated N-terminus. Also mediates nuclear localization of the pre-integration complex. Functionally, constituent of the pre-integration complex (PIC) which tethers the latter to mitotic chromosomes. This allows the integration of the viral genome into the host DNA. In terms of biological role, forms the spherical core of the virion that encapsulates the genomic RNA-nucleocapsid complex. Its function is as follows. Involved in the packaging and encapsidation of two copies of the genome. Binds with high affinity to conserved UCUG elements within the packaging signal, located near the 5'-end of the genome. This binding is dependent on genome dimerization. Acts as a nucleic acid chaperone which is involved in rearrangement of nucleic acid secondary structures during gRNA retrotranscription. The aspartyl protease mediates proteolytic cleavages of Gag and Gag-Pol polyproteins during or shortly after the release of the virion from the plasma membrane. Cleavages take place as an ordered, step-wise cascade to yield mature proteins. This process is called maturation. Displays maximal activity during the budding process just prior to particle release from the cell (Potential). Cleaves the translation initiation factor eIF4G leading to the inhibition of host cap-dependent translation. Functionally, RT is a multifunctional enzyme that converts the viral dimeric RNA genome into dsDNA in the cytoplasm, shortly after virus entry into the cell. This enzyme displays a DNA polymerase activity that can copy either DNA or RNA templates, and a ribonuclease H (RNase H) activity that cleaves the RNA strand of RNA-DNA heteroduplexes in a partially processive 3' to 5' endonucleasic mode. Conversion of viral genomic RNA into dsDNA requires many steps. A tRNA binds to the primer-binding site (PBS) situated at the 5' end of the viral RNA. RT uses the 3' end of the tRNA primer to perform a short round of RNA-dependent minus-strand DNA synthesis. The reading proceeds through the U5 region and ends after the repeated (R) region which is present at both ends of viral RNA. The portion of the RNA-DNA heteroduplex is digested by the RNase H, resulting in a ssDNA product attached to the tRNA primer. This ssDNA/tRNA hybridizes with the identical R region situated at the 3' end of viral RNA. This template exchange, known as minus-strand DNA strong stop transfer, can be either intra- or intermolecular. RT uses the 3' end of this newly synthesized short ssDNA to perform the RNA-dependent minus-strand DNA synthesis of the whole template. RNase H digests the RNA template except for a polypurine tract (PPT) situated at the 5' end of the genome. It is not clear if both polymerase and RNase H activities are simultaneous. RNase H probably can proceed both in a polymerase-dependent (RNA cut into small fragments by the same RT performing DNA synthesis) and a polymerase-independent mode (cleavage of remaining RNA fragments by free RTs). Secondly, RT performs DNA-directed plus-strand DNA synthesis using the PPT that has not been removed by RNase H as primers. PPT and tRNA primers are then removed by RNase H. The 3' and 5' ssDNA PBS regions hybridize to form a circular dsDNA intermediate. Strand displacement synthesis by RT to the PBS and PPT ends produces a blunt ended, linear dsDNA copy of the viral genome that includes long terminal repeats (LTRs) at both ends. In terms of biological role, catalyzes viral DNA integration into the host chromosome, by performing a series of DNA cutting and joining reactions. This enzyme activity takes place after virion entry into a cell and reverse transcription of the RNA genome in dsDNA. The first step in the integration process is 3' processing. This step requires a complex comprising the viral genome, matrix protein and integrase. This complex is called the pre-integration complex (PIC). The integrase protein removes 2 nucleotides from each 3' end of the viral DNA, leaving recessed CA OH's at the 3' ends. In the second step that requires cell division, the PIC enters cell nucleus. In the third step, termed strand transfer, the integrase protein joins the previously processed 3' ends to the 5' ends of strands of target cellular DNA at the site of integration. The last step is viral DNA integration into host chromosome. This is Gag-Pol polyprotein (pol) from AKV murine leukemia virus (AKR (endogenous) murine leukemia virus).